Reading from the N-terminus, the 274-residue chain is Large ribosomal subunit protein uL2 (274 aa).

Residues 223–265 (VVMNPVDHPHGGGEGRTSGGRHPVSPWGVPTKGYKTRSNKRTD) are disordered.

Belongs to the universal ribosomal protein uL2 family. As to quaternary structure, part of the 50S ribosomal subunit. Forms a bridge to the 30S subunit in the 70S ribosome.

Functionally, one of the primary rRNA binding proteins. Required for association of the 30S and 50S subunits to form the 70S ribosome, for tRNA binding and peptide bond formation. It has been suggested to have peptidyltransferase activity; this is somewhat controversial. Makes several contacts with the 16S rRNA in the 70S ribosome. This is Large ribosomal subunit protein uL2 from Vibrio vulnificus (strain CMCP6).